The chain runs to 622 residues: Chaperone protein HscA homolog (622 aa).

Belongs to the heat shock protein 70 family.

In terms of biological role, chaperone involved in the maturation of iron-sulfur cluster-containing proteins. Has a low intrinsic ATPase activity which is markedly stimulated by HscB. In Burkholderia multivorans (strain ATCC 17616 / 249), this protein is Chaperone protein HscA homolog.